A 339-amino-acid chain; its full sequence is Glucokinase (339 aa).

ATP is bound at residue glycine 16–threonine 21.

It belongs to the bacterial glucokinase family.

The protein localises to the cytoplasm. The enzyme catalyses D-glucose + ATP = D-glucose 6-phosphate + ADP + H(+). This is Glucokinase from Rhizobium meliloti (strain 1021) (Ensifer meliloti).